A 446-amino-acid chain; its full sequence is Keratin, type I cytoskeletal 25 (446 aa).

A disordered region spans residues 1–20 (MSLRLSSGSKRSYARPSTGS). The tract at residues 1-74 (MSLRLSSGSK…VNEGGLLSGN (74 aa)) is head. Positions 75–110 (EKVTMQNLNDRLASYLDNVQALQEANADLEQKIKGW) are coil 1A. The region spanning 75 to 390 (EKVTMQNLND…LLIGGDEGAC (316 aa)) is the IF rod domain. The tract at residues 111–132 (YEKFGPGSCRGLDHDYSRYFPI) is linker 1. The interval 133-224 (IDDLKNQIIT…KNHKEEMQAL (92 aa)) is coil 1B. The segment at 225-247 (QCAAGGNVNVEMNAAPGVDLTVL) is linker 12. The coil 2 stretch occupies residues 248 to 386 (LNNMRAEYEA…ETYCLLIGGD (139 aa)). Residues 387–446 (EGACKSSSYKSKDYTSGNAGNQSKDSPKAIVVKKVLEEVDQRSKILTTRLHSLEEKSQSN) are tail. Positions 394–413 (SYKSKDYTSGNAGNQSKDSP) are disordered. Polar residues predominate over residues 400 to 410 (YTSGNAGNQSK). Serine 438 carries the post-translational modification Phosphoserine.

It belongs to the intermediate filament family. Heterodimer of a type I and a type II keratin. Heterodimer with type II keratin KRT5 leading to the formation of keratin intermediate filament (KIF) network. Interacts with KRT6A to form filaments.

Its subcellular location is the cytoplasm. Functionally, essential for the proper assembly of type I and type II keratin protein complexes and formation of keratin intermediate filaments in the inner root sheath (irs). Plays a role in the cytoskeleton organization. The sequence is that of Keratin, type I cytoskeletal 25 from Rattus norvegicus (Rat).